The sequence spans 208 residues: Holliday junction resolvase RecU (208 aa).

The segment at 1 to 30 (MNYPNGKPFNRNKSQVGRTHKGQTSKIDYG) is disordered. Positions 87, 89, 102, and 121 each coordinate Mg(2+).

It belongs to the RecU family. The cofactor is Mg(2+).

It is found in the cytoplasm. The catalysed reaction is Endonucleolytic cleavage at a junction such as a reciprocal single-stranded crossover between two homologous DNA duplexes (Holliday junction).. Its function is as follows. Endonuclease that resolves Holliday junction intermediates in genetic recombination. Cleaves mobile four-strand junctions by introducing symmetrical nicks in paired strands. Promotes annealing of linear ssDNA with homologous dsDNA. Required for DNA repair, homologous recombination and chromosome segregation. The polypeptide is Holliday junction resolvase RecU (Staphylococcus saprophyticus subsp. saprophyticus (strain ATCC 15305 / DSM 20229 / NCIMB 8711 / NCTC 7292 / S-41)).